Consider the following 164-residue polypeptide: F-box protein At4g05010 (164 aa).

The tract at residues 38–57 (SKRAPENDSPPVKRPSHETT) is disordered. The region spanning 61 to 109 (RSLLETLHQDILIRVLCHVDHEDLATLKRVSKTIRKAVIEAKKSHFDYS) is the F-box domain.

The polypeptide is F-box protein At4g05010 (Arabidopsis thaliana (Mouse-ear cress)).